We begin with the raw amino-acid sequence, 500 residues long: Citrate lyase alpha chain (500 aa).

In terms of assembly, oligomer with a subunit composition of (alpha,beta,gamma)6.

The protein resides in the cytoplasm. The catalysed reaction is citrate = oxaloacetate + acetate. It carries out the reaction citrate + acetyl-CoA = (3S)-citryl-CoA + acetate. Represents a citrate:acetyl-ACP transferase. In Haemophilus influenzae (strain ATCC 51907 / DSM 11121 / KW20 / Rd), this protein is Citrate lyase alpha chain (citF).